Reading from the N-terminus, the 353-residue chain is D-alanine--D-alanine ligase (353 aa).

In terms of domain architecture, ATP-grasp spans 135-344 (KMVFAQAGLA…FPQLVDRLVQ (210 aa)). 171-226 (EAQLDYPMFVKPANLGSSVGISKVRTRDELEKALDLAAEYDRRLIVEAGVTAREVE) serves as a coordination point for ATP. 3 residues coordinate Mg(2+): aspartate 297, glutamate 311, and asparagine 313.

The protein belongs to the D-alanine--D-alanine ligase family. Mg(2+) serves as cofactor. It depends on Mn(2+) as a cofactor.

It localises to the cytoplasm. The catalysed reaction is 2 D-alanine + ATP = D-alanyl-D-alanine + ADP + phosphate + H(+). The protein operates within cell wall biogenesis; peptidoglycan biosynthesis. Cell wall formation. The chain is D-alanine--D-alanine ligase from Picosynechococcus sp. (strain ATCC 27264 / PCC 7002 / PR-6) (Agmenellum quadruplicatum).